Here is a 250-residue protein sequence, read N- to C-terminus: Cholesterol ring-cleaving hydrolase IpdB subunit (250 aa).

Belongs to the 3-oxoacid CoA-transferase subunit B family. In terms of assembly, heterotetramer composed of 2 IpdA subunits and 2 IpdB subunits.

It carries out the reaction (3E)-2-(2-carboxylatoethyl)-3-methyl-6-oxocyclohex-1-ene-1-carboxyl-CoA + H2O = 6-methyl-3,7-dioxodecanedioyl-CoA. It functions in the pathway steroid metabolism; cholesterol degradation. Its function is as follows. Involved in the final steps of cholesterol and steroid degradation. Opens the last steroid ring of cholesterol by catalyzing the hydrolysis of (3E)-2-(2-carboxylatoethyl)-3-methyl-6-oxocyclohex-1-ene-1-carboxyl-CoA (COCHEA-CoA) to 6-methyl-3,7-dioxodecanedioyl-CoA (MeDODA-CoA). The polypeptide is Cholesterol ring-cleaving hydrolase IpdB subunit (Mycobacterium bovis (strain ATCC BAA-935 / AF2122/97)).